The chain runs to 65 residues: UPF0337 protein BCE_1081 (65 aa).

Residues 1-28 (MSGGLKEQITGKVEKTKGQVKEGIGEVT) form a disordered region. A compositionally biased stretch (basic and acidic residues) spans 12 to 28 (KVEKTKGQVKEGIGEVT).

The protein belongs to the UPF0337 (CsbD) family.

The sequence is that of UPF0337 protein BCE_1081 from Bacillus cereus (strain ATCC 10987 / NRS 248).